A 120-amino-acid chain; its full sequence is Ig heavy chain V region AC38 15.3 (120 aa).

The v segment stretch occupies residues 1–98; it reads QVQLLQPGTE…EDSAVYYCAR (98 aa). A disulfide bridge connects residues C22 and C96. The segment at 99-105 is d segment; the sequence is WDYEGDR. Residues 106-120 form a j segment region; sequence YFDVWGTGTTVTVSS.

In Mus musculus (Mouse), this protein is Ig heavy chain V region AC38 15.3.